A 373-amino-acid polypeptide reads, in one-letter code: 4-hydroxy-3-methylbut-2-en-1-yl diphosphate synthase (flavodoxin) (373 aa).

[4Fe-4S] cluster contacts are provided by Cys-270, Cys-273, Cys-305, and Glu-312.

It belongs to the IspG family. [4Fe-4S] cluster is required as a cofactor.

The catalysed reaction is (2E)-4-hydroxy-3-methylbut-2-enyl diphosphate + oxidized [flavodoxin] + H2O + 2 H(+) = 2-C-methyl-D-erythritol 2,4-cyclic diphosphate + reduced [flavodoxin]. Its pathway is isoprenoid biosynthesis; isopentenyl diphosphate biosynthesis via DXP pathway; isopentenyl diphosphate from 1-deoxy-D-xylulose 5-phosphate: step 5/6. Its function is as follows. Converts 2C-methyl-D-erythritol 2,4-cyclodiphosphate (ME-2,4cPP) into 1-hydroxy-2-methyl-2-(E)-butenyl 4-diphosphate. The sequence is that of 4-hydroxy-3-methylbut-2-en-1-yl diphosphate synthase (flavodoxin) from Proteus mirabilis (strain HI4320).